Consider the following 44-residue polypeptide: Thymosin beta-10 (44 aa).

Composition is skewed to basic and acidic residues over residues Met-1–Glu-25 and Glu-33–Ser-44. The interval Met-1–Ser-44 is disordered. The residue at position 2 (Ala-2) is an N-acetylalanine. At Lys-4 the chain carries N6-acetyllysine. Ser-12 bears the Phosphoserine mark. At Lys-15 the chain carries N6-acetyllysine. Residues Thr-21, Thr-23, and Thr-34 each carry the phosphothreonine modification. The residue at position 39 (Lys-39) is an N6-acetyllysine. Ser-41 carries the phosphoserine modification.

This sequence belongs to the thymosin beta family.

Its subcellular location is the cytoplasm. It is found in the cytoskeleton. Plays an important role in the organization of the cytoskeleton. Binds to and sequesters actin monomers (G actin) and therefore inhibits actin polymerization. This Rattus norvegicus (Rat) protein is Thymosin beta-10 (Tmsb10).